Reading from the N-terminus, the 3595-residue chain is MFCECPRSNLVVMCSGAFCCVLCGHRRRPRPASESDRAKYGPIVQYVEARVAHVYSGLEGRYCALEMIPITYGNKFPYCKPLPVSFVIKTLAGVQGDLTRLEETPLPGGYGVIPCWGPHLAAVGYLSPAHVGRDWFEGATHAIVHIGSYGGHERPTTIPFNTTGGDVYQLGTCTIVETIDHVEWHAGVKPGTAICPLDRIDFAQKVITAFPEGFLANKAWLGDKRGTLKVEADPETAALSFEHGRCWLKLFPDPACELTTASTFGYQLNCGVQGKYIARRLQTNGLKLVQNQEGKFIAYTFHRGSWLGHIGHADESVPPDCQIIARFDVLPYNEWSPLPLLKLPGKTYFGGNASSVSWPEWKYDEQLLYADSLTAGFCWLQLFPPLSRKSEAQRAILAQQVNNYGVTGTYLEYRLRQYGIVLAECDYGEHYIYAAASDSSIRHISPVPIHDRHHVFVTRLTARFGAFDEGFDLGFGTRYGRRRGGGKKSGQSSGVRAPGRTTPDLAGDWGKAVDDQEKTASKVTTDKAMSTSEPAVVQVGCETKPVADAAAVPASVNSTGCALLPVQADPCCTAGVAAKESEPKAVAAPSIPITFGAPAGETLPVAASPLVVKKDKRCISVKLTAKKALPKETFIPPPDGGCGVHAFAAIQYHINTGHWPEQKPVVNWAYEAWTTNEDIGHMICSTETPAALEPCLHARYVVRLDSDHWVVDHYPNRPMCFVEACAHGWCSSLLSEPTGEEGEHLVDCSALYDCLGKFRNGTEFADTVLGLSKTAHCCNKRVPTPRKQAIMSLLNRPNCVPCIAPPSQVRTVDPSQPAAPLPPVPRPRKRKAAAQQVSKVPSEQDPSLAHDPPEKPDSVRPPKLGYLDRAWNNMLARTHKLHNLQQRVFGLYPQLLSMLLPSGARPSTPRLLGCYFSMAVAMFFLFLGSPLFILCAVLAGVIAPSARYPKILCCCLVVVYICTLFADAISSVCDNDDADCRAFLSDLGDRYSTNQPVYITPGPATFFLAVSRNFFVVSVALFPLHLLLLMVDVLLVIGVLCMDGYCFRCFSRCVRKAPEEVSLLTIPQSRVSRRFLLDICDFYSAPPVDIIRLATGLNGCFRGDYSPIGSSTSVITADKIDVKKVSCRTVCSFPSCPSEAVKVLHVLSVRGQMCAHNEQKVEKVDALPCKNPLFPYDLSSKKIVPVDSGTYEILSSIGCDMSHLVIGDGDFFKVMGVPRPSPFTVMRLRACRVVGGGRIFRTALAAAWVLFFVCAGYWVQMSTPCGIGTNDPFCKSSFGVPTYVNQGVCHGQYCASSKGVSRATSILTVRNPAVAPYIVLAACLVYLASVYVPGIIEVSLLVLNALLPAGPAISALRTLVMIIAAPHLSMKYIAFFCCTTAFVDFTSVVVVLTALLVGWILARYTGIGGFVTPYDIHDVVKSQRDGVAVANAPPNTYLGAVRRAALTGKPAFFVANNTGIVLEGLLREKTRASNSVSVYGVTCGSGGLFSDGNNTVCLTATHVCGNNKAVVDYQGTRYEAVFTTKGDYASAVVPIPGAFPPLKFAPQSYTGRAYWYANTGVETGFVGTTGCLVFSGPGDSGSPIITPDGLIVGVHTGSDSKGSGAYTTPNGLTVSGPLSLKEMGAHYEGPIVDVPTRLPRNVHNDTKSVPQPLARLLESSINLEGGLGTIQLIIVAVVLWKYAVDPLSIPFVVAFFLLNEILPKCLIRCFYNYSLFCLAAFSPLASRIFFIRLLTAALNRNPTALICHACFAGIAVLNDFIILGDIRLALRFTSFYVVGVNHDAIAIAVIGALVCVAACCLELFGLPQMASVIGCHGSFDPTFLSRYVHEGIRQGVSSGFGTESLSTALACALSEDELNFLAQAVDHKAIVSAIHVHKTLQDYILSKNAKILRASLASVHANHNASKALASLDKFLQGTSTQLKPGDPVILLGSTSAELVSVFSGDSEYIAEPIRSHPVAGTICTLCVVQAKCEGGLVTQVNGKFSPAKYLAVAGKVLADHPDYKLENDGRFPRTREDRVKDSVQVDTVDIGSHTFKKMWNKTTGDVWYDIIMPESAANPLAVHDLDSAVAAIGMSKEIPEKDMNRLRAIISKLQGLVSSEALNLLTAAGCTSADRSGLVITLDYAKIITHHARTRAFSSIDFKVVSPDEAMRTARLSPSPQPIIASFSDDKFLLLRRHPPSLLDVLTKGLDATCREPLHSPGDQGIDGYLWDFEAPHSKEAIWLSNQIISACAARRGDAPGCYPYKLHPVRGDPYRVGNVLKNTRFGDVTYTAVSDSDSPWLKVASINSGGCPVVTDRVLGSTIPVGSEIYLPTLPESVLDYLDSRPDCPTYYTQHGCEAAALQDLKKFNLSTQGFILPEVLNIVRNYLLGTIGYRPAIYKPSTVPSNDSHAGINGLSFSTKTLQALPDIDELCEKAIAEVWQTVTPVTLKKQFCSKAKTRTILGTNAMASLALRALLSGVTQGFQLAGKNSPICLGKSKFDPCTFEVKGRCLETDLASCDRSTPAIVRHFATKLLFEMACAERALPLYVVNCCHDLIVTQTSAATKRGGLSSGDPVTSIANTIYSLVLYVQHMVLTLLENGHPLSLKFLSGKLNFQDLYKLQAFIVYSDDLILLNESDDLPNFERWVPHLELALGFKVDPKKTVITSNPGFLGCEYRHGWLVPQKQRVLAALAYHVNAKDVHTYYINATAILNDASALSAFEPDWFDDLVIGLADCARKDGYSFPGPAAFREFFSRVSGYQFEGKEVQVCSICCSTARTTSLCGMALCDFCAHRHYHPGCHVLSSFCKHVIGSNTCKMCSIPILKDRTKFAELLASDQYRSVCTVEVTVVDGYTDAAPGRYSYQKKQYMLRKERRGCPLDLPDGKYSMKLLPNSCSGICVPKAQENATLSNFVVGPPGSGKTTFISNLLDDDAVVYCPTHVSLIAYSKSLPAARFSVPRGQDPAEYGTPALSGPTLQLLSAGYVPGAKHYLDEACYANPFDVFKLLSKTPITAIGDPAQLTPVGFDTPLYVFELMKKNALHAIYRFGQNICNAIQPCYSTKLVSQRQGDTEVIFQTKFAPRGKVLTPYHRDRVGAAVTIDSSQGSTYDVVTLYLPTKGSLTLARGLVGITRARERLYVYDPHHQLAKYFNLQPSSTTIRPHAVVIDGKARVMLSDKCYAAPEDFPGMLCTARPATAADRKILEETCLKLDFLESGSLSPLPRVCYNLGFYYSPDITKLLPIPSELAKHWPVATNRNNPEWPNRLVVSATRLSPLSHPAVCAGYYVGDSLFVGTPNVTSYWLTKFLDGRAVPMEDSVYSTGRFEMDIRDYLDSAERDFAAKHPHAFIGDTKGTTVGGCHHITSQYLPHVLPADSVVKVGVSKPGVAHKALCTVTDIYLPMLGSYTSPPTQSKVYKVNVDHKACKLMVWRDQTMYFQEGFDYHTLVDALRFVRLSSDGVYRVAPELTPMIGNRRLDLGAKPLRPVDLAITPWDDPKCEFLVTHASPFDMSDEFLLVNAFDFIKEDLLGKSVTPVYFYKRLSEPLHFDQNLPPHVGAILSKAPRFISLAKVFNFCFTPTACHCKVSVKTATGDHMCKCSLSSDEFLSRFNPTVGTP.

The C4-type; atypical zinc finger occupies 3-23; it reads CECPRSNLVVMCSGAFCCVLC. One can recognise a Peptidase C31 domain in the interval 56–164; it reads SGLEGRYCAL…PTTIPFNTTG (109 aa). Catalysis depends on for Nsp1-alpha papain-like cysteine proteinase activity residues Cys63 and His130. One can recognise a Peptidase C32 domain in the interval 239–350; that stretch reads LSFEHGRCWL…LKLPGKTYFG (112 aa). Active-site for Nsp1-beta papain-like cysteine proteinase activity residues include Cys246 and His309. Active-site for Nsp2 cysteine proteinase activity residues include Cys378 and His430. The tract at residues 482-527 is disordered; sequence RRGGGKKSGQSSGVRAPGRTTPDLAGDWGKAVDDQEKTASKVTTDK. Over residues 511–520 the composition is skewed to basic and acidic residues; that stretch reads KAVDDQEKTA. Positions 633–736 constitute a Peptidase C33 domain; sequence TFIPPPDGGC…HGWCSSLLSE (104 aa). The interval 808–862 is disordered; sequence QVRTVDPSQPAAPLPPVPRPRKRKAAAQQVSKVPSEQDPSLAHDPPEKPDSVRPP. Positions 851-860 are enriched in basic and acidic residues; that stretch reads DPPEKPDSVR. 7 helical membrane-spanning segments follow: residues 922–942, 951–971, 1019–1039, 1239–1259, 1316–1336, 1345–1365, and 1381–1401; these read MFFL…AGVI, ILCC…AISS, VALF…VIGV, IFRT…GYWV, PYIV…PGII, ALLP…IIAA, and AFVD…GWIL. Residues 922 to 1039 are HD1; that stretch reads MFFLFLGSPL…MVDVLLVIGV (118 aa). The interval 1239 to 1399 is HD2; that stretch reads IFRTALAAAW…VVLTALLVGW (161 aa). The Peptidase S32 domain maps to 1464 to 1664; the sequence is GLLREKTRAS…RLLESSINLE (201 aa). Active-site charge relay system; for 3C-like serine proteinase activity residues include His1502, Asp1527, and Ser1580. 4 helical membrane-spanning segments follow: residues 1673–1693, 1711–1731, 1744–1764, and 1784–1804; these read IIVA…PFVV, YNYS…IFFI, ALIC…IILG, and AIAI…LELF. The HD3 stretch occupies residues 1687 to 1804; that stretch reads LSIPFVVAFF…CVAACCLELF (118 aa). A NiRAN domain is found at 2083-2253; it reads DMNRLRAIIS…YPYKLHPVRG (171 aa). The RdRp catalytic domain occupies 2491-2625; sequence GRCLETDLAS…LNESDDLPNF (135 aa). The region spanning 2746–2812 is the AV ZBD domain; that stretch reads GKEVQVCSIC…IPILKDRTKF (67 aa). Zn(2+)-binding residues include Cys2752, Cys2755, Cys2765, Cys2770, Cys2773, His2777, His2779, Cys2782, Cys2789, His2791, Cys2798, and Cys2801. Residues 2862–3022 enclose the (+)RNA virus helicase ATP-binding domain; that stretch reads DLPDGKYSMK…VFELMKKNAL (161 aa). An ATP-binding site is contributed by 2897–2904; that stretch reads GPPGSGKT. The (+)RNA virus helicase C-terminal domain maps to 3023–3157; it reads HAIYRFGQNI…DGKARVMLSD (135 aa). Positions 3196–3292 constitute an AV-Nsp11N/CoV-Nsp15M domain; that stretch reads SGSLSPLPRV…LTKFLDGRAV (97 aa). The region spanning 3294–3416 is the NendoU domain; it reads MEDSVYSTGR…MVWRDQTMYF (123 aa). Catalysis depends on residues His3325, His3340, and Lys3369.

The protein belongs to the arteriviridae polyprotein family. Specific enzymatic cleavages in vivo by its own proteases yield mature proteins. There are two alternative pathways for processing. Either nsp4-5 is cleaved, which represents the major pathway or the nsp5-6 and nsp6-7 are processed, which represents the minor pathway. The major pathway occurs when nsp2 acts as a cofactor for nsp4.

It localises to the host membrane. The protein localises to the host cytoplasm. Its subcellular location is the host perinuclear region. The enzyme catalyses RNA(n) + a ribonucleoside 5'-triphosphate = RNA(n+1) + diphosphate. The catalysed reaction is ATP + H2O = ADP + phosphate + H(+). It carries out the reaction uridylyl-uridylyl-ribonucleotide-RNA = a 3'-end uridylyl-2',3'-cyclophospho-uridine-RNA + a 5'-end dephospho-ribonucleoside-RNA. In terms of biological role, the replicase polyprotein 1ab is a multifunctional protein: it contains the activities necessary for the transcription of negative stranded RNA, leader RNA, subgenomic mRNAs and progeny virion RNA as well as proteinases responsible for the cleavage of the polyprotein into functional products. Its function is as follows. The Nsp1 chain is essential for viral subgenomic mRNA synthesis. Functionally, the 3C-like serine proteinase chain is responsible for the majority of cleavages as it cleaves the C-terminus of the polyprotein. Plays a role in viral transcription/replication and prevents the simultaneous activation of host cell dsRNA sensors, such as MDA5/IFIH1, OAS, and PKR. Acts by degrading the 5'-polyuridines generated during replication of the poly(A) region of viral genomic and subgenomic RNAs. Catalyzes a two-step reaction in which a 2'3'-cyclic phosphate (2'3'-cP) is first generated by 2'-O transesterification, which is then hydrolyzed to a 3'-phosphate (3'-P). If not degraded, poly(U) RNA would hybridize with poly(A) RNA tails and activate host dsRNA sensors. In terms of biological role, the helicase chain, which contains a zinc finger structure, displays RNA and DNA duplex-unwinding activities with 5' to 3' polarity. The chain is Replicase polyprotein 1ab (rep) from Simian hemorrhagic fever virus (SHFV).